A 762-amino-acid chain; its full sequence is 5-methyltetrahydropteroyltriglutamate--homocysteine methyltransferase (762 aa).

Residues 17-20 (REWK) and lysine 111 contribute to the 5-methyltetrahydropteroyltri-L-glutamate site. Residues 435–437 (IGS) and glutamate 488 contribute to the L-homocysteine site. Residues 435–437 (IGS) and glutamate 488 each bind L-methionine. Residues 519-520 (RC) and tryptophan 565 contribute to the 5-methyltetrahydropteroyltri-L-glutamate site. Residue aspartate 603 coordinates L-homocysteine. L-methionine is bound at residue aspartate 603. Residue glutamate 609 coordinates 5-methyltetrahydropteroyltri-L-glutamate. Residues histidine 645, cysteine 647, and glutamate 669 each contribute to the Zn(2+) site. Histidine 698 acts as the Proton donor in catalysis. Position 730 (cysteine 730) interacts with Zn(2+).

It belongs to the vitamin-B12 independent methionine synthase family. It depends on Zn(2+) as a cofactor.

The catalysed reaction is 5-methyltetrahydropteroyltri-L-glutamate + L-homocysteine = tetrahydropteroyltri-L-glutamate + L-methionine. The protein operates within amino-acid biosynthesis; L-methionine biosynthesis via de novo pathway; L-methionine from L-homocysteine (MetE route): step 1/1. Catalyzes the transfer of a methyl group from 5-methyltetrahydrofolate to homocysteine resulting in methionine formation. The protein is 5-methyltetrahydropteroyltriglutamate--homocysteine methyltransferase of Bacillus mycoides (strain KBAB4) (Bacillus weihenstephanensis).